The sequence spans 266 residues: Phosphatidylglycerol--prolipoprotein diacylglyceryl transferase (266 aa).

The next 7 helical transmembrane spans lie at V10–I30, L56–Y76, W92–F112, F120–I140, P171–F191, A199–V219, and W233–V253. R139 contributes to the a 1,2-diacyl-sn-glycero-3-phospho-(1'-sn-glycerol) binding site.

Belongs to the Lgt family.

It localises to the cell inner membrane. The catalysed reaction is L-cysteinyl-[prolipoprotein] + a 1,2-diacyl-sn-glycero-3-phospho-(1'-sn-glycerol) = an S-1,2-diacyl-sn-glyceryl-L-cysteinyl-[prolipoprotein] + sn-glycerol 1-phosphate + H(+). Its pathway is protein modification; lipoprotein biosynthesis (diacylglyceryl transfer). In terms of biological role, catalyzes the transfer of the diacylglyceryl group from phosphatidylglycerol to the sulfhydryl group of the N-terminal cysteine of a prolipoprotein, the first step in the formation of mature lipoproteins. The protein is Phosphatidylglycerol--prolipoprotein diacylglyceryl transferase of Pseudomonas aeruginosa (strain LESB58).